A 153-amino-acid polypeptide reads, in one-letter code: Ubiquitin-conjugating enzyme E2 35 (153 aa).

Residues 5 to 151 (NLPRRIIKET…AKEWTRLYAS (147 aa)) form the UBC core domain. Residue C89 is the Glycyl thioester intermediate of the active site.

It belongs to the ubiquitin-conjugating enzyme family. In terms of assembly, interacts with yeast and human Mms2, with the RING domain of RGLG2 and with UEV1A, UEV1B, UEV1C and UEV1D. As to expression, ubiquitously expressed at low level. Mainly expressed in the vasculature.

It catalyses the reaction S-ubiquitinyl-[E1 ubiquitin-activating enzyme]-L-cysteine + [E2 ubiquitin-conjugating enzyme]-L-cysteine = [E1 ubiquitin-activating enzyme]-L-cysteine + S-ubiquitinyl-[E2 ubiquitin-conjugating enzyme]-L-cysteine.. It participates in protein modification; protein ubiquitination. Functionally, catalyzes the synthesis of non-canonical poly-ubiquitin chains that are linked through 'Lys-63'. This type of poly-ubiquitination does not lead to protein degradation by the proteasome. Mediates transcriptional activation of target genes. Required for postreplication repair of UV-damaged DNA and for adapting root developmental programs to suboptimal availability of iron. The sequence is that of Ubiquitin-conjugating enzyme E2 35 (UBC35) from Arabidopsis thaliana (Mouse-ear cress).